We begin with the raw amino-acid sequence, 258 residues long: MQEETFYSVRMRASMNGSHEDGGKHISGGERLIPFHEMKRTVNSLLEKGLSHSRGKPDFMQIQFEEVHEPIKTIQPLPVRTNEVSSPEEGQKLARLLLEREGVSREVIEKAYQQIISWSGVRGAVLFDIHSGKRIDQTKGKGVRVSRMDWPDANFEKWALRYHVPAHSRIKEALALASKVSRFPAAVAELCWSDDPDYITGYVAGKKMGYQRITALKEYGSEDGCRIFFIDGSEDVNTYIHDLEKQPILIEWEEDHDS.

This sequence belongs to the BioW family. As to quaternary structure, homodimer. Mg(2+) is required as a cofactor.

It carries out the reaction heptanedioate + ATP + CoA = 6-carboxyhexanoyl-CoA + AMP + diphosphate. It functions in the pathway metabolic intermediate metabolism; pimeloyl-CoA biosynthesis; pimeloyl-CoA from pimelate: step 1/1. In terms of biological role, catalyzes the transformation of pimelate into pimeloyl-CoA with concomitant hydrolysis of ATP to AMP. The chain is 6-carboxyhexanoate--CoA ligase from Bacillus spizizenii (strain ATCC 23059 / NRRL B-14472 / W23) (Bacillus subtilis subsp. spizizenii).